A 189-amino-acid polypeptide reads, in one-letter code: Interferon alpha-G (189 aa).

An N-terminal signal peptide occupies residues 1-23; sequence MAPAWSLLLALLLLSCNAICSLG. Disulfide bonds link Cys24–Cys122 and Cys52–Cys162.

It belongs to the alpha/beta interferon family.

Its subcellular location is the secreted. Functionally, produced by macrophages, IFN-alpha have antiviral activities. Interferon stimulates the production of two enzymes: a protein kinase and an oligoadenylate synthetase. In Bos taurus (Bovine), this protein is Interferon alpha-G (IFNAG).